Reading from the N-terminus, the 399-residue chain is O-glucosyltransferase rumi homolog (399 aa).

Residues 1 to 18 form the signal peptide; sequence MHFIIGIVICLSLSVIQS. N-linked (GlcNAc...) asparagine glycans are attached at residues Asn-19 and Asn-67. 4 disulfides stabilise this stretch: Cys-66-Cys-73, Cys-71-Cys-373, Cys-118-Cys-124, and Cys-277-Cys-300. The active-site Proton donor/acceptor is Asp-149. The segment at 189 to 194 is interaction with the consensus sequence C-X-S-X-[PA]-C in peptide substrates; the sequence is AIALYP. UDP-alpha-D-glucose is bound by residues 224 to 228, Arg-232, 271 to 273, and 289 to 293; these read RGSRT, VTL, and AASFR.

This sequence belongs to the glycosyltransferase 90 family.

It localises to the endoplasmic reticulum lumen. Its subcellular location is the secreted. Its pathway is protein modification; protein glycosylation. Functionally, protein O-glucosyltransferase. Catalyzes the reaction that attaches glucose through an O-glycosidic linkage to a conserved serine residue found in the consensus sequence C-X-S-X-[PA]-C in epidermal growth factor-like repeats. Regulates Notch signaling by glucosylating Notch in the ER, glucosylation is required for the correct folding and cleavage of Notch. The protein is O-glucosyltransferase rumi homolog of Anopheles gambiae (African malaria mosquito).